Consider the following 438-residue polypeptide: GDP-mannose 6-dehydrogenase (438 aa).

Residues Y10, V11, D30, K35, T86, and T124 each contribute to the NAD(+) site. 10 residues coordinate GDP-alpha-D-mannuronate: E161, K210, N214, H217, N225, Y256, Y257, R259, F262, and G265. Residue C268 is part of the active site. K271 is a binding site for NAD(+). K324 lines the GDP-alpha-D-mannuronate pocket. R331 provides a ligand contact to NAD(+).

The protein belongs to the UDP-glucose/GDP-mannose dehydrogenase family.

The enzyme catalyses GDP-alpha-D-mannose + 2 NAD(+) + H2O = GDP-alpha-D-mannuronate + 2 NADH + 3 H(+). Its pathway is glycan biosynthesis; alginate biosynthesis. Catalyzes the oxidation of guanosine diphospho-D-mannose (GDP-D-mannose) to GDP-D-mannuronic acid, a precursor for alginate polymerization. The alginate layer causes a mucoid phenotype and provides a protective barrier against host immune defenses and antibiotics. In Pseudomonas putida (strain ATCC 47054 / DSM 6125 / CFBP 8728 / NCIMB 11950 / KT2440), this protein is GDP-mannose 6-dehydrogenase (algD).